Here is a 301-residue protein sequence, read N- to C-terminus: Light-independent protochlorophyllide reductase iron-sulfur ATP-binding protein (301 aa).

Low complexity predominate over residues 1–13 (MNVTLRPPLAAAP). Residues 1–22 (MNVTLRPPLAAAPRRPDGAGSV) are disordered. ATP-binding positions include 45 to 50 (GIGKST) and Lys-74. Residue Ser-49 participates in Mg(2+) binding. [4Fe-4S] cluster contacts are provided by Cys-130 and Cys-164. Residues 215–216 (NR) and 239–241 (PDL) each bind ATP.

Belongs to the NifH/BchL/ChlL family. Homodimer. Protochlorophyllide reductase is composed of three subunits; BchL, BchN and BchB. Requires [4Fe-4S] cluster as cofactor.

The catalysed reaction is chlorophyllide a + oxidized 2[4Fe-4S]-[ferredoxin] + 2 ADP + 2 phosphate = protochlorophyllide a + reduced 2[4Fe-4S]-[ferredoxin] + 2 ATP + 2 H2O. The protein operates within porphyrin-containing compound metabolism; bacteriochlorophyll biosynthesis (light-independent). Functionally, component of the dark-operative protochlorophyllide reductase (DPOR) that uses Mg-ATP and reduced ferredoxin to reduce ring D of protochlorophyllide (Pchlide) to form chlorophyllide a (Chlide). This reaction is light-independent. The L component serves as a unique electron donor to the NB-component of the complex, and binds Mg-ATP. This Bradyrhizobium sp. (strain ORS 278) protein is Light-independent protochlorophyllide reductase iron-sulfur ATP-binding protein.